Here is a 602-residue protein sequence, read N- to C-terminus: MDSRITTILERYRSDRTRLIDILWDVQHEYGHIPDAVLPQLGAGLKLSPLDIRETASFYHFFLDKPSGKYRIYLCNSVIAKINGYQAVREALERETGIRFGETDPNGMFGLFDTPCIGLSDQEPAMLIDKVVFTRLRPGKITDIIAQLKQGRSPAEIANPAGLPSQDIAYVDAMVESNVRTKGPVFFRGRTDLRSLLDQCLLLKPEQVIETIVDSRLRGRGGAGFSTGLKWRLCRDAESEQKYVICNADEGEPGTFKDRVLLTRAPKKVFVGMVIAAYAIGCRKGIVYLRGEYFYLKDYLERQLQELREDGLLGRAIGGRAGFDFDIRIQMGAGAYICGDESALIESCEGKRGTPRVKPPFPVQQGYLGKPTSVNNVETFAAVSRIMEEGADWFRAMGTPDSAGTRLLSVAGDCSKPGIYEVEWGVTLNEVLAMVGARDARAVQISGPSGECVSVAKDGERKLAYEDLSCNGAFTIFNCKRDLLEIVRDHMQFFVEESCGICVPCRAGNVDLHRKVEWVIAGKACQKDLDDMVSWGALVRRTSRCGLGATSPKPILTTLEKFPEIYQNKLVRHEGPLLPSFDLDTALGGYEKALKDLEEVTR.

Position 219–228 (219–228) interacts with NAD(+); it reads GRGGAGFSTG. 332-379 is an FMN binding site; it reads GAGAYICGDESALIESCEGKRGTPRVKPPFPVQQGYLGKPTSVNNVET. [4Fe-4S] cluster-binding residues include Cys499, Cys502, Cys505, and Cys545.

It belongs to the complex I 51 kDa subunit family. In terms of assembly, tetramer of an alpha and a gamma subunits (flavin-containing dimer), and a delta and a nickel-containing beta subunit (hydrogenase dimer). Requires FMN as cofactor. [4Fe-4S] cluster is required as a cofactor.

It localises to the cytoplasm. The catalysed reaction is H2 + NAD(+) = NADH + H(+). Its function is as follows. Subunits alpha and gamma of HoxS constitute an NADH--oxidoreductase. This Cupriavidus necator (strain ATCC 17699 / DSM 428 / KCTC 22496 / NCIMB 10442 / H16 / Stanier 337) (Ralstonia eutropha) protein is NAD-reducing hydrogenase HoxS subunit alpha (hoxF).